Consider the following 1074-residue polypeptide: Semaphorin-5A (1074 aa).

The N-terminal stretch at 1–22 (MKGTCVIAWLFSSLGLWRLAHP) is a signal peptide. The Extracellular segment spans residues 23 to 968 (EAQGTTQCQR…EEKRCGEFNM (946 aa)). Residues 35–484 (HPVISYKEIG…LREHVVKIPL (450 aa)) form the Sema domain. 2 cysteine pairs are disulfide-bonded: Cys104–Cys114 and Cys131–Cys140. 4 N-linked (GlcNAc...) asparagine glycosylation sites follow: Asn142, Asn168, Asn227, and Asn277. 2 disulfides stabilise this stretch: Cys254-Cys357 and Cys278-Cys320. Asn323, Asn367, and Asn437 each carry an N-linked (GlcNAc...) asparagine glycan. Cystine bridges form between Cys487-Cys504 and Cys496-Cys513. Residues Asn536 and Asn591 are each glycosylated (N-linked (GlcNAc...) asparagine). TSP type-1 domains follow at residues 540–593 (DGHF…ANCS), 595–651 (NGGW…LLCP), 653–702 (HMFW…NPCP), 707–765 (TTPW…GCST), 784–839 (NGAW…LPCP), 841–896 (DGVW…QPCP), and 897–944 (ESWS…VFDS). Cystine bridges form between Cys607-Cys644, Cys611-Cys650, Cys622-Cys634, Cys665-Cys696, Cys669-Cys701, and Cys680-Cys686. N-linked (GlcNAc...) asparagine glycosylation is present at Asn717. Cystine bridges form between Cys796/Cys833, Cys800/Cys838, Cys811/Cys823, Cys853/Cys890, Cys857/Cys895, and Cys868/Cys880. N-linked (GlcNAc...) asparagine glycosylation is present at Asn933. Residues 969-989 (FHMIAVGLSSSILGCLLTLLV) form a helical membrane-spanning segment. Residues 990 to 1074 (YTYCQRYQQQ…FTDLNNYDEY (85 aa)) lie on the Cytoplasmic side of the membrane.

Belongs to the semaphorin family. In terms of assembly, binds PLXNB3.

It localises to the membrane. Its function is as follows. Bifunctional axonal guidance cue regulated by sulfated proteoglycans; attractive effects result from interactions with heparan sulfate proteoglycans (HSPGs), while the inhibitory effects depend on interactions with chondroitin sulfate proteoglycans (CSPGs). Ligand for receptor PLXNB3. In glioma cells, SEMA5A stimulation of PLXNB3 results in the disassembly of F-actin stress fibers, disruption of focal adhesions and cellular collapse as well as inhibition of cell migration and invasion through ARHGDIA-mediated inactivation of RAC1. May promote angiogenesis by increasing endothelial cell proliferation and migration and inhibiting apoptosis. This chain is Semaphorin-5A (SEMA5A), found in Homo sapiens (Human).